The following is a 269-amino-acid chain: Holocytochrome-c synthase (269 aa).

A disordered region spans residues 1–72 (MGWFWADQKT…ASKQPGQKMD (72 aa)). HRM repeat units follow at residues 25 to 30 (GCPVMH) and 41 to 46 (ECPVMQ).

The protein belongs to the cytochrome c-type heme lyase family.

It is found in the mitochondrion inner membrane. It localises to the mitochondrion intermembrane space. The catalysed reaction is holo-[cytochrome c] = apo-[cytochrome c] + heme b. Lyase that catalyzes the covalent linking of the heme group to the cytochrome C apoprotein to produce the mature functional cytochrome. The sequence is that of Holocytochrome-c synthase (CYC3) from Saccharomyces cerevisiae (strain ATCC 204508 / S288c) (Baker's yeast).